The sequence spans 1522 residues: Lysophospholipase NTE1 (1522 aa).

Residues Met-1–Thr-73 are Lumenal-facing. A helical membrane pass occupies residues Val-74–Leu-94. The Cytoplasmic segment spans residues Arg-95–Ile-1522. Disordered regions lie at residues Ser-443–Lys-468, Asp-485–Pro-523, and Ser-535–Val-556. Composition is skewed to low complexity over residues Lys-498 to Ser-511 and Pro-540 to Val-555. A nucleoside 3',5'-cyclic phosphate contacts are provided by residues Pro-661–Leu-782 and Thr-778–Lys-918. Disordered stretches follow at residues Gln-828 to Pro-852 and Ser-1125 to Pro-1145. Residues Leu-1219 to Lys-1383 enclose the PNPLA domain. The GXGXXG motif lies at Gly-1223–Gly-1228. The GXSXG motif lies at Gly-1250–Gly-1254. Ser-1252 (nucleophile) is an active-site residue. The Proton acceptor role is filled by Asp-1370. The DGA/G motif lies at Asp-1370–Gly-1372.

The protein belongs to the NTE family.

The protein localises to the endoplasmic reticulum membrane. The enzyme catalyses a 1-acyl-sn-glycero-3-phosphocholine + H2O = sn-glycerol 3-phosphocholine + a fatty acid + H(+). Its activity is regulated as follows. Inhibited by organophosphorus esters. In terms of biological role, intracellular phospholipase B that catalyzes the double deacylation of phosphatidylcholine (PC) to glycerophosphocholine (GroPCho). Plays an important role in membrane lipid homeostasis. Responsible for the rapid PC turnover in response to inositol, elevated temperatures, or when choline is present in the growth medium. This is Lysophospholipase NTE1 (NTE1) from Eremothecium gossypii (strain ATCC 10895 / CBS 109.51 / FGSC 9923 / NRRL Y-1056) (Yeast).